The chain runs to 323 residues: tRNA-dihydrouridine(16) synthase (323 aa).

Residues 7–9 (PME) and Gln-68 contribute to the FMN site. Catalysis depends on Cys-98, which acts as the Proton donor. FMN is bound by residues Lys-139, 199 to 201 (NGE), and 223 to 224 (GR).

This sequence belongs to the Dus family. DusC subfamily. The cofactor is FMN.

It carries out the reaction 5,6-dihydrouridine(16) in tRNA + NADP(+) = uridine(16) in tRNA + NADPH + H(+). The catalysed reaction is 5,6-dihydrouridine(16) in tRNA + NAD(+) = uridine(16) in tRNA + NADH + H(+). Its function is as follows. Catalyzes the synthesis of 5,6-dihydrouridine (D), a modified base found in the D-loop of most tRNAs, via the reduction of the C5-C6 double bond in target uridines. Specifically modifies U16 in tRNAs. This is tRNA-dihydrouridine(16) synthase from Pseudomonas putida (strain ATCC 47054 / DSM 6125 / CFBP 8728 / NCIMB 11950 / KT2440).